Here is a 1395-residue protein sequence, read N- to C-terminus: DNA-directed RNA polymerase subunit beta' (1395 aa).

C70, C72, C85, and C88 together coordinate Zn(2+). Mg(2+) is bound by residues D470, D472, and D474. C815, C889, C896, and C899 together coordinate Zn(2+).

The protein belongs to the RNA polymerase beta' chain family. In terms of assembly, the RNAP catalytic core consists of 2 alpha, 1 beta, 1 beta' and 1 omega subunit. When a sigma factor is associated with the core the holoenzyme is formed, which can initiate transcription. It depends on Mg(2+) as a cofactor. Requires Zn(2+) as cofactor.

It carries out the reaction RNA(n) + a ribonucleoside 5'-triphosphate = RNA(n+1) + diphosphate. Functionally, DNA-dependent RNA polymerase catalyzes the transcription of DNA into RNA using the four ribonucleoside triphosphates as substrates. The sequence is that of DNA-directed RNA polymerase subunit beta' from Anaeromyxobacter sp. (strain Fw109-5).